We begin with the raw amino-acid sequence, 1116 residues long: DNA-directed RNA polymerase subunit beta (1116 aa).

Residues 1070–1100 show a composition bias toward basic and acidic residues; it reads KIREEEKEREKEREAREMEDPEKIVSKIDAK. The interval 1070-1116 is disordered; sequence KIREEEKEREKEREAREMEDPEKIVSKIDAKQKKKYKKTKKQTEKKK. A compositionally biased stretch (basic residues) spans 1101 to 1116; that stretch reads QKKKYKKTKKQTEKKK.

The protein belongs to the RNA polymerase beta chain family. In terms of assembly, in plastids the minimal PEP RNA polymerase catalytic core is composed of four subunits: alpha, beta, beta', and beta''. When a (nuclear-encoded) sigma factor is associated with the core the holoenzyme is formed, which can initiate transcription.

Its subcellular location is the plastid. It is found in the chloroplast. It catalyses the reaction RNA(n) + a ribonucleoside 5'-triphosphate = RNA(n+1) + diphosphate. Its function is as follows. DNA-dependent RNA polymerase catalyzes the transcription of DNA into RNA using the four ribonucleoside triphosphates as substrates. This chain is DNA-directed RNA polymerase subunit beta, found in Heterosigma akashiwo (Chromophytic alga).